The sequence spans 282 residues: Bis(5'-nucleosyl)-tetraphosphatase, symmetrical (282 aa).

It belongs to the Ap4A hydrolase family.

The enzyme catalyses P(1),P(4)-bis(5'-adenosyl) tetraphosphate + H2O = 2 ADP + 2 H(+). Hydrolyzes diadenosine 5',5'''-P1,P4-tetraphosphate to yield ADP. In Salmonella agona (strain SL483), this protein is Bis(5'-nucleosyl)-tetraphosphatase, symmetrical.